A 105-amino-acid chain; its full sequence is Small ribosomal subunit protein bS20 (105 aa).

It belongs to the bacterial ribosomal protein bS20 family.

Binds directly to 16S ribosomal RNA. This chain is Small ribosomal subunit protein bS20, found in Caldanaerobacter subterraneus subsp. tengcongensis (strain DSM 15242 / JCM 11007 / NBRC 100824 / MB4) (Thermoanaerobacter tengcongensis).